Consider the following 396-residue polypeptide: Tryptophan synthase beta chain 1 (396 aa).

Residue K86 is modified to N6-(pyridoxal phosphate)lysine.

The protein belongs to the TrpB family. As to quaternary structure, tetramer of two alpha and two beta chains. Pyridoxal 5'-phosphate is required as a cofactor.

The enzyme catalyses (1S,2R)-1-C-(indol-3-yl)glycerol 3-phosphate + L-serine = D-glyceraldehyde 3-phosphate + L-tryptophan + H2O. It participates in amino-acid biosynthesis; L-tryptophan biosynthesis; L-tryptophan from chorismate: step 5/5. In terms of biological role, the beta subunit is responsible for the synthesis of L-tryptophan from indole and L-serine. The chain is Tryptophan synthase beta chain 1 (trpB1) from Vibrio parahaemolyticus serotype O3:K6 (strain RIMD 2210633).